A 438-amino-acid chain; its full sequence is Xylose isomerase (438 aa).

Catalysis depends on residues His-100 and Asp-103. Residues Glu-231, Glu-267, His-270, Asp-295, Asp-306, Asp-308, and Asp-338 each contribute to the Mg(2+) site.

It belongs to the xylose isomerase family. Homotetramer. Requires Mg(2+) as cofactor.

Its subcellular location is the cytoplasm. The catalysed reaction is alpha-D-xylose = alpha-D-xylulofuranose. This Caldanaerobacter subterraneus subsp. yonseiensis (Thermoanaerobacter yonseiensis) protein is Xylose isomerase.